The following is a 323-amino-acid chain: Beta-ketoacyl-[acyl-carrier-protein] synthase III (323 aa).

Catalysis depends on residues C114 and H250. Residues 251–255 (QANLR) are ACP-binding. N280 is an active-site residue.

It belongs to the thiolase-like superfamily. FabH family. In terms of assembly, homodimer.

The protein resides in the cytoplasm. The catalysed reaction is malonyl-[ACP] + acetyl-CoA + H(+) = 3-oxobutanoyl-[ACP] + CO2 + CoA. The protein operates within lipid metabolism; fatty acid biosynthesis. Catalyzes the condensation reaction of fatty acid synthesis by the addition to an acyl acceptor of two carbons from malonyl-ACP. Catalyzes the first condensation reaction which initiates fatty acid synthesis and may therefore play a role in governing the total rate of fatty acid production. Possesses both acetoacetyl-ACP synthase and acetyl transacylase activities. Its substrate specificity determines the biosynthesis of branched-chain and/or straight-chain of fatty acids. The sequence is that of Beta-ketoacyl-[acyl-carrier-protein] synthase III from Cereibacter sphaeroides (strain ATCC 17025 / ATH 2.4.3) (Rhodobacter sphaeroides).